A 194-amino-acid polypeptide reads, in one-letter code: dITP/XTP pyrophosphatase (194 aa).

A substrate-binding site is contributed by 8–13 (TGNPGK). The Mg(2+) site is built by Glu-38 and Asp-67. Catalysis depends on Asp-67, which acts as the Proton acceptor. Residues Ser-68, 146-149 (FGYD), Lys-169, and 174-175 (HR) each bind substrate.

Belongs to the HAM1 NTPase family. As to quaternary structure, homodimer. Mg(2+) serves as cofactor.

The catalysed reaction is XTP + H2O = XMP + diphosphate + H(+). It catalyses the reaction dITP + H2O = dIMP + diphosphate + H(+). The enzyme catalyses ITP + H2O = IMP + diphosphate + H(+). Functionally, pyrophosphatase that catalyzes the hydrolysis of nucleoside triphosphates to their monophosphate derivatives, with a high preference for the non-canonical purine nucleotides XTP (xanthosine triphosphate), dITP (deoxyinosine triphosphate) and ITP. Seems to function as a house-cleaning enzyme that removes non-canonical purine nucleotides from the nucleotide pool, thus preventing their incorporation into DNA/RNA and avoiding chromosomal lesions. This chain is dITP/XTP pyrophosphatase, found in Synechocystis sp. (strain ATCC 27184 / PCC 6803 / Kazusa).